Reading from the N-terminus, the 228-residue chain is Orotidine 5'-phosphate decarboxylase (228 aa).

Substrate is bound by residues Asp-20, Lys-42, 70–79 (DFKVADIPET), Ser-127, 180–190 (PGVGAQGGDPG), Gly-202, and Arg-203. Lys-72 serves as the catalytic Proton donor.

It belongs to the OMP decarboxylase family. Type 1 subfamily. As to quaternary structure, homodimer.

It catalyses the reaction orotidine 5'-phosphate + H(+) = UMP + CO2. It participates in pyrimidine metabolism; UMP biosynthesis via de novo pathway; UMP from orotate: step 2/2. In terms of biological role, catalyzes the decarboxylation of orotidine 5'-monophosphate (OMP) to uridine 5'-monophosphate (UMP). In Methanothermobacter thermautotrophicus (strain ATCC 29096 / DSM 1053 / JCM 10044 / NBRC 100330 / Delta H) (Methanobacterium thermoautotrophicum), this protein is Orotidine 5'-phosphate decarboxylase (pyrF).